The following is a 406-amino-acid chain: MKAVIFIMDGLGDRPNKDGNTPLKEAKTPIMDKMAKDGICGLMNAVDVGVRPGSDTAHLAILGYDPYTTYTGRGPFEACGVGVTVKPGDIAFRCNFSSVDENFIVTDRRAGRIENTSELEKELDGLKIDDVEIIFKESGGYRAALVLRGPGLSDRISDADPKKEGKRVKEIHPLDDSKEAKKTAEIVNRLLKIAYEKLDKHPVNEERRKQNLPVANMIVPRGVGQVPEIMPFTEKTGLKGACIAGTGLIKGIAKMVGLDVIDVEGCDGTPNSDLMAKACAIVETLKNYDFILVNVKGADEAGHDGNYELKKEIIERIDEMLDYITKNISKDEVYFVISGDHSTPIEEMDHSADPLPIVIWGKSVRVDDVEKFDEFSTHKGGLNWIKGTNIMPILMDLMSIAKKYGA.

The protein belongs to the BPG-independent phosphoglycerate mutase family. A-PGAM subfamily.

It carries out the reaction (2R)-2-phosphoglycerate = (2R)-3-phosphoglycerate. It functions in the pathway carbohydrate degradation; glycolysis; pyruvate from D-glyceraldehyde 3-phosphate: step 3/5. Catalyzes the interconversion of 2-phosphoglycerate and 3-phosphoglycerate. This Methanococcus maripaludis (strain C7 / ATCC BAA-1331) protein is 2,3-bisphosphoglycerate-independent phosphoglycerate mutase.